A 375-amino-acid polypeptide reads, in one-letter code: Queuine tRNA-ribosyltransferase (375 aa).

D89 serves as the catalytic Proton acceptor. Substrate-binding positions include 89–93 (DSGGF), D143, Q187, and G214. The tract at residues 245–251 (GVGKPED) is RNA binding. The active-site Nucleophile is D264. The RNA binding; important for wobble base 34 recognition stretch occupies residues 269-273 (TRNAR). Zn(2+) is bound by residues C302, C304, C307, and H333.

The protein belongs to the queuine tRNA-ribosyltransferase family. Homodimer. Within each dimer, one monomer is responsible for RNA recognition and catalysis, while the other monomer binds to the replacement base PreQ1. Zn(2+) serves as cofactor.

The enzyme catalyses 7-aminomethyl-7-carbaguanine + guanosine(34) in tRNA = 7-aminomethyl-7-carbaguanosine(34) in tRNA + guanine. It participates in tRNA modification; tRNA-queuosine biosynthesis. Functionally, catalyzes the base-exchange of a guanine (G) residue with the queuine precursor 7-aminomethyl-7-deazaguanine (PreQ1) at position 34 (anticodon wobble position) in tRNAs with GU(N) anticodons (tRNA-Asp, -Asn, -His and -Tyr). Catalysis occurs through a double-displacement mechanism. The nucleophile active site attacks the C1' of nucleotide 34 to detach the guanine base from the RNA, forming a covalent enzyme-RNA intermediate. The proton acceptor active site deprotonates the incoming PreQ1, allowing a nucleophilic attack on the C1' of the ribose to form the product. After dissociation, two additional enzymatic reactions on the tRNA convert PreQ1 to queuine (Q), resulting in the hypermodified nucleoside queuosine (7-(((4,5-cis-dihydroxy-2-cyclopenten-1-yl)amino)methyl)-7-deazaguanosine). The protein is Queuine tRNA-ribosyltransferase of Aliivibrio fischeri (strain ATCC 700601 / ES114) (Vibrio fischeri).